The sequence spans 339 residues: Serine/arginine-rich splicing factor 6 (339 aa).

Residues 2–72 (PRVYIGRLSY…ERVIVEHARG (71 aa)) form the RRM 1 domain. Residues serine 45, serine 81, and serine 84 each carry the phosphoserine modification. Positions 75–103 (RDRDGYSYGSRSGGGGYSSRRTSGRDKYG) are disordered. In terms of domain architecture, RRM 2 spans 110 to 183 (YRLIVENLSS…RNIRLIEDKP (74 aa)). Lysine 165 carries the post-translational modification N6-acetyllysine. The disordered stretch occupies residues 176–339 (IRLIEDKPRT…RSRSRSSSRD (164 aa)). Lysine 182 is covalently cross-linked (Glycyl lysine isopeptide (Lys-Gly) (interchain with G-Cter in SUMO2)). Over residues 185–250 (TSHRRSYSGS…RKSRSKSKSK (66 aa)) the composition is skewed to basic residues. The segment covering 280 to 291 (SPKENGKGDIKS) has biased composition (basic and acidic residues). 2 positions are modified to phosphoserine: serine 297 and serine 299. At serine 303 the chain carries Phosphoserine; by DYRK1A. A phosphoserine mark is found at serine 314 and serine 316. The span at 321 to 339 (RASRSRSRSRSRSRSSSRD) shows a compositional bias: basic residues.

The protein belongs to the splicing factor SR family. In terms of assembly, binds SREK1/SFRS12. Interacts with DYRK1A. Interacts with RBMY; the interaction inhibits SRSF6 pre-mRNA splicing. Post-translationally, extensively phosphorylated on serine residues in the RS domain. Phosphorylated by DYRK1A, probably in the RS domain. Phosphorylation by DYRK1A modulates alternative splice site selection and inhibits the expression of MAPT/Tau exon 10.

The protein resides in the nucleus. It localises to the nucleus speckle. Plays a role in constitutive splicing and modulates the selection of alternative splice sites. Plays a role in the alternative splicing of MAPT/Tau exon 10. Binds to alternative exons of TNC pre-mRNA and promotes the expression of alternatively spliced TNC. Plays a role in wound healing and in the regulation of keratinocyte differentiation and proliferation via its role in alternative splicing. The chain is Serine/arginine-rich splicing factor 6 (Srsf6) from Mus musculus (Mouse).